A 256-amino-acid polypeptide reads, in one-letter code: Thiazole synthase (256 aa).

The active-site Schiff-base intermediate with DXP is the K95. 1-deoxy-D-xylulose 5-phosphate-binding positions include G156, 182-183 (AG), and 204-205 (NT).

It belongs to the ThiG family. Homotetramer. Forms heterodimers with either ThiH or ThiS.

It localises to the cytoplasm. It catalyses the reaction [ThiS sulfur-carrier protein]-C-terminal-Gly-aminoethanethioate + 2-iminoacetate + 1-deoxy-D-xylulose 5-phosphate = [ThiS sulfur-carrier protein]-C-terminal Gly-Gly + 2-[(2R,5Z)-2-carboxy-4-methylthiazol-5(2H)-ylidene]ethyl phosphate + 2 H2O + H(+). It participates in cofactor biosynthesis; thiamine diphosphate biosynthesis. Its function is as follows. Catalyzes the rearrangement of 1-deoxy-D-xylulose 5-phosphate (DXP) to produce the thiazole phosphate moiety of thiamine. Sulfur is provided by the thiocarboxylate moiety of the carrier protein ThiS. In vitro, sulfur can be provided by H(2)S. The protein is Thiazole synthase of Alteromonas mediterranea (strain DSM 17117 / CIP 110805 / LMG 28347 / Deep ecotype).